The chain runs to 3301 residues: Cadherin EGF LAG seven-pass G-type receptor 3 (3301 aa).

The signal sequence occupies residues 1–31 (MARRPLWWGLPGPSTPVLLLLLLSLFPFSRE). The Extracellular portion of the chain corresponds to 32–2531 (ELGGGGDQDW…RLEGDLELLA (2500 aa)). 2 disordered regions span residues 148–189 (LPLD…ARRS) and 202–314 (KLWE…NRHP). Over residues 267 to 276 (MRSRGLFRRR) the composition is skewed to basic residues. Cadherin domains are found at residues 317 to 424 (PQYN…APVF), 425 to 536 (EQAQ…APQF), 537 to 642 (SEKR…APIF), 643 to 747 (VSTP…RPEF), 748 to 849 (TMKE…RPVF), 850 to 952 (QSAH…APQF), 953 to 1058 (VASH…APVF), 1059 to 1160 (PAEE…SPVL), and 1161 to 1257 (NNFQ…VVII). N-linked (GlcNAc...) asparagine glycosylation occurs at asparagine 623. The N-linked (GlcNAc...) asparagine glycan is linked to asparagine 838. Asparagine 1173, asparagine 1213, asparagine 1308, and asparagine 1318 each carry an N-linked (GlcNAc...) asparagine glycan. Residues 1366–1424 (DDNVCLREPCENYMKCVSVLRFDSSAPFLASTSTLFRPIQPIAGLRCRCPPGFTGDFCE) enclose the EGF-like 1; calcium-binding domain. Disulfide bonds link cysteine 1370/cysteine 1381, cysteine 1375/cysteine 1412, cysteine 1414/cysteine 1423, cysteine 1430/cysteine 1441, cysteine 1435/cysteine 1450, cysteine 1452/cysteine 1459, cysteine 1468/cysteine 1479, cysteine 1473/cysteine 1489, and cysteine 1491/cysteine 1502. Residues 1426–1460 (ELDLCYSNPCRNGGACARREGGYTCVCRPRFTDCE) form the EGF-like 2; calcium-binding domain. Residues 1464-1503 (EAGRCVPGVCRNGGTCTNAPNGGFRCQCPAGGAFEGPRCE) enclose the EGF-like 3; calcium-binding domain. The 205-residue stretch at 1504–1708 (VAARSFPPSS…VANNGTMAGC (205 aa)) folds into the Laminin G-like 1 domain. Asparagine 1638 and asparagine 1702 each carry an N-linked (GlcNAc...) asparagine glycan. Cystine bridges form between cysteine 1682-cysteine 1708, cysteine 1715-cysteine 1726, cysteine 1720-cysteine 1735, and cysteine 1737-cysteine 1746. The EGF-like 4; calcium-binding domain maps to 1711–1747 (KSHFCASGPCKNNGFCSERWGGFSCDCPVGFGGKDCR). Residues 1751-1933 (AHPYHFQGNG…SHRVNVEPGC (183 aa)) form the Laminin G-like 2 domain. Asparagine 1759 carries N-linked (GlcNAc...) asparagine glycosylation. 9 cysteine pairs are disulfide-bonded: cysteine 1904-cysteine 1933, cysteine 1939-cysteine 1950, cysteine 1944-cysteine 1959, cysteine 1961-cysteine 1970, cysteine 1974-cysteine 1985, cysteine 1979-cysteine 1997, cysteine 1999-cysteine 2008, cysteine 2016-cysteine 2029, and cysteine 2031-cysteine 2041. One can recognise an EGF-like 5; calcium-binding domain in the interval 1935-1971 (VTNPCASGPCPPHADCKDLWQTFSCTCRPGYYGPGCV). (3R)-3-hydroxyaspartate is present on aspartate 1952. Positions 1972 to 2002 (DACLLNPCQNQGSCRHLQGAPHGYTCDCVSG) constitute an EGF-like 6; calcium-binding domain. The region spanning 2003 to 2042 (YFGQHCEHRVDQQCPRGWWGSPTCGPCNCDVHKGFDPNCN) is the EGF-like 7; calcium-binding domain. The N-linked (GlcNAc...) asparagine glycan is linked to asparagine 2042. The EGF-like 8; calcium-binding domain maps to 2044 to 2079 (TNGQCHCKEFHYRPRGSDSCLPCDCYPVGSTSRSCA). Disulfide bonds link cysteine 2048/cysteine 2063, cysteine 2050/cysteine 2066, cysteine 2068/cysteine 2078, cysteine 2087/cysteine 2096, and cysteine 2099/cysteine 2111. Residues 2066–2113 (CDCYPVGSTSRSCAPHSGQCPCRPGALGRQCNSCDSPFAEVTASGCRV) enclose the Laminin EGF-like domain. Phosphotyrosine is present on tyrosine 2115. N-linked (GlcNAc...) asparagine glycosylation is found at asparagine 2166, asparagine 2185, asparagine 2375, asparagine 2465, and asparagine 2497. The segment at 2353 to 2388 (LLPSQASQPSPSEVLPTSSNAENATASSVVSPPAPL) is disordered. Residues 2355–2383 (PSQASQPSPSEVLPTSSNAENATASSVVS) are compositionally biased toward low complexity. The 165-residue stretch at 2357 to 2521 (QASQPSPSEV…GVLMDASPRE (165 aa)) folds into the GAIN-B domain. Cystine bridges form between cysteine 2471/cysteine 2503 and cysteine 2491/cysteine 2505. Residues 2471-2521 (CVQWDPPGPTDQHGMWTARDCELVHRNGSHARCRCSRTGTFGVLMDASPRE) are GPS. Residues 2532-2552 (VFTHVVVAVSVTALVLTAAVL) form a helical membrane-spanning segment. Topologically, residues 2553–2563 (LSLRSLKSNVR) are cytoplasmic. Residues 2564–2584 (GIHANVAAALGVAELLFLLGI) form a helical membrane-spanning segment. The Extracellular segment spans residues 2585–2592 (HRTHNQLL). The chain crosses the membrane as a helical span at residues 2593-2613 (CTAVAILLHYFFLSTFAWLLV). Residues 2614-2634 (QGLHLYRMQVEPRNVDRGAMR) lie on the Cytoplasmic side of the membrane. A helical membrane pass occupies residues 2635 to 2655 (FYHALGWGVPAVLLGLAVGLD). Over 2656–2673 (PEGYGNPDFCWISIHEPL) the chain is Extracellular. Residues 2674 to 2694 (IWSFAGPIVLVIVMNGTMFLL) form a helical membrane-spanning segment. The Cytoplasmic segment spans residues 2695–2716 (AARTSCSTGQREAKKTSVLTLR). The helical transmembrane segment at 2717 to 2737 (SSFLLLLLVSASWLFGLLAVN) threads the bilayer. Over 2738–2744 (HSILAFH) the chain is Extracellular. The helical transmembrane segment at 2745–2765 (YLHAGLCGLQGLAVLLLFCVL) threads the bilayer. At 2766–3301 (NADARAAWTP…SEVPRSEGHS (536 aa)) the chain is on the cytoplasmic side. Disordered stretches follow at residues 2823-2844 (SSAR…YLRD), 2879-2919 (AGAD…RPLR), and 2969-2992 (SNKD…TSLG). Residues 2881–2891 (ADSDSDSDLSL) show a composition bias toward acidic residues. A compositionally biased stretch (basic residues) spans 2910–2919 (TRGRFQRPLR). At tyrosine 3042 the chain carries Phosphotyrosine. A disordered region spans residues 3083 to 3301 (APVLHPLSRP…SEVPRSEGHS (219 aa)). Serine 3090 is subject to Phosphoserine. The segment covering 3094-3111 (SQERLDTAPARLEARDRG) has biased composition (basic and acidic residues). 2 stretches are compositionally biased toward low complexity: residues 3168 to 3189 (SPQR…SLSR) and 3239 to 3261 (LSSI…STPS). Residues 3276 to 3289 (TPRSATSHSISELS) show a composition bias toward polar residues.

Belongs to the G-protein coupled receptor 2 family. LN-TM7 subfamily. In terms of tissue distribution, expressed in the CNS and in the eye.

The protein localises to the cell membrane. Functionally, receptor that may have an important role in cell/cell signaling during nervous system formation. This Mus musculus (Mouse) protein is Cadherin EGF LAG seven-pass G-type receptor 3 (Celsr3).